The primary structure comprises 459 residues: GTPase Der (459 aa).

2 EngA-type G domains span residues 4–169 (PLVA…PEVT) and 179–355 (IAVS…AAHR). Residues 10-17 (GRPNVGKS), 57-61 (DTGGL), 120-123 (NKCE), 185-192 (GRPNVGKS), 232-236 (DTAGI), and 297-300 (NKWD) contribute to the GTP site. In terms of domain architecture, KH-like spans 356-441 (KRVPTAVVNE…PIRFLWRGKS (86 aa)).

Belongs to the TRAFAC class TrmE-Era-EngA-EngB-Septin-like GTPase superfamily. EngA (Der) GTPase family. As to quaternary structure, associates with the 50S ribosomal subunit.

In terms of biological role, GTPase that plays an essential role in the late steps of ribosome biogenesis. The sequence is that of GTPase Der from Synechococcus sp. (strain JA-2-3B'a(2-13)) (Cyanobacteria bacterium Yellowstone B-Prime).